An 85-amino-acid polypeptide reads, in one-letter code: Glutaredoxin (85 aa).

The Glutaredoxin domain maps to 1-85 (MQTVTMYTGP…EGGLDGLLNP (85 aa)). A disulfide bridge links Cys-12 with Cys-15.

It belongs to the glutaredoxin family. In terms of assembly, monomer.

It localises to the cytoplasm. Functionally, has a glutathione-disulfide oxidoreductase activity in the presence of NADPH and glutathione reductase. Reduces low molecular weight disulfides and proteins. The polypeptide is Glutaredoxin (grx) (Neisseria meningitidis serogroup A / serotype 4A (strain DSM 15465 / Z2491)).